The chain runs to 363 residues: Early boundary activity protein 1 (363 aa).

Residues 155-168 (MDQEPEHKQSHEQD) show a composition bias toward basic and acidic residues. Positions 155 to 242 (MDQEPEHKQS…NAKRRCPGFE (88 aa)) are disordered. Positions 198 to 209 (EDLGLDDDDEDY) are enriched in acidic residues. The 100-residue stretch at 255-354 (GPNGTEVSRI…TKCADENKML (100 aa)) folds into the BEN domain.

As to quaternary structure, the heterotrimeric Elba complex consists of Elba1, Elba2 and Elba3.

It localises to the nucleus. Functionally, the heterotrimeric Elba complex is required for chromatin domain boundary function during early embryogenesis. It binds to a 8-bp sequence 5'-CCAATAAG-3' in the Fab-7 insulator or boundary element in the bithorax complex and contributes to its insulator or boundary activity. Elba1 may act as a transcriptional repressor and binds the palindromic sequence 5'-CCAATTGG-3' to mediate transcriptional repression. The sequence is that of Early boundary activity protein 1 from Drosophila melanogaster (Fruit fly).